We begin with the raw amino-acid sequence, 257 residues long: Beta-fibrinogenase mucrofibrase-1 (257 aa).

An N-terminal signal peptide occupies residues methionine 1–alanine 18. Positions glutamine 19 to leucine 24 are excised as a propeptide. The Peptidase S1 domain maps to valine 25–alanine 248. 6 disulfides stabilise this stretch: cysteine 31-cysteine 162, cysteine 49-cysteine 65, cysteine 97-cysteine 255, cysteine 141-cysteine 209, cysteine 173-cysteine 188, and cysteine 199-cysteine 224. Catalysis depends on charge relay system residues histidine 64 and aspartate 109. The Charge relay system role is filled by serine 203.

It belongs to the peptidase S1 family. Snake venom subfamily. In terms of assembly, monomer. Expressed by the venom gland.

The protein localises to the secreted. In terms of biological role, snake venom serine protease with strong beta-fibrinogenolytic activities, angiotensin I (AGT)-degrading activities and strong kallikrein-like activities in vitro, releasing bradykinin from kininogen (KNG1). Intravenous injection strongly lowers blood pressure in experimental rats, which may be explained by the action on angiotensin I and kininogen. The protein is Beta-fibrinogenase mucrofibrase-1 of Protobothrops mucrosquamatus (Taiwan habu).